The sequence spans 629 residues: tRNA uridine 5-carboxymethylaminomethyl modification enzyme MnmG (629 aa).

Residues 13 to 18 (GGGHAG), Val125, and Ser180 contribute to the FAD site. Position 273–287 (273–287 (GPRYCPSIEDKVMRF)) interacts with NAD(+). Position 370 (Gln370) interacts with FAD.

This sequence belongs to the MnmG family. As to quaternary structure, homodimer. Heterotetramer of two MnmE and two MnmG subunits. FAD serves as cofactor.

The protein localises to the cytoplasm. In terms of biological role, NAD-binding protein involved in the addition of a carboxymethylaminomethyl (cmnm) group at the wobble position (U34) of certain tRNAs, forming tRNA-cmnm(5)s(2)U34. The sequence is that of tRNA uridine 5-carboxymethylaminomethyl modification enzyme MnmG from Sodalis glossinidius (strain morsitans).